Here is a 356-residue protein sequence, read N- to C-terminus: Serine/arginine-rich splicing factor RS41 (356 aa).

RRM domains follow at residues 2–74 (KPVF…WTKN) and 96–167 (KTLF…YAVK). The disordered stretch occupies residues 73–92 (KNDRGGAGRSGGSRRSSSGL). The span at 168–186 (DDDSRGNGYSPERRRDRSP) shows a compositional bias: basic and acidic residues. Positions 168 to 356 (DDDSRGNGYS…SPSRSPPAEE (189 aa)) are disordered. Residues Ser-192, Ser-194, Ser-210, Ser-239, Ser-254, and Ser-274 each carry the phosphoserine modification. The segment covering 238–253 (LSPDYKRDDRRRERVA) has biased composition (basic and acidic residues). 3 repeat units span residues 267–278 (KGRGESRSPPPY), 279–290 (EKRRESRSPPPY), and 291–302 (EKRRESRSPPPY). The tract at residues 267–307 (KGRGESRSPPPYEKRRESRSPPPYEKRRESRSPPPYEKRRE) is 4 X 12 AA tandem repeats of [KE]-[GK]-R -[GR]-E-S-R-S-P-P-P-Y. Positions 268–306 (GRGESRSPPPYEKRRESRSPPPYEKRRESRSPPPYEKRR) are enriched in basic and acidic residues. One copy of the 4; truncated repeat lies at 303–307 (EKRRE). A phosphoserine mark is found at Ser-309, Ser-324, Ser-342, Ser-347, and Ser-351.

Belongs to the splicing factor SR family. RS subfamily. Component of the spliceosome. Interacts with RCF3 and CPL1. Interacts with DRB1/HYL1 and SE. As to expression, leaves, stem, roots and flowers.

It is found in the nucleus. The protein resides in the nucleus speckle. Its function is as follows. Required for constitutive and alternative pre-mRNA splicing. Involved in primary miRNA processing and pri-miRNA biogenesis. Binds both intronless and intron-containing pri-miRNAs. The sequence is that of Serine/arginine-rich splicing factor RS41 (RS41) from Arabidopsis thaliana (Mouse-ear cress).